We begin with the raw amino-acid sequence, 152 residues long: Transcription elongation factor Spt5 (152 aa).

Positions 99–129 constitute a KOW domain; that stretch reads EGDLVEVISGPFRGMQAQVVRVESTKNEVVL.

This sequence belongs to the archaeal Spt5 family. Heterodimer composed of Spt4 and Spt5. Interacts with RNA polymerase (RNAP).

In terms of biological role, stimulates transcription elongation. The sequence is that of Transcription elongation factor Spt5 from Sulfolobus acidocaldarius (strain ATCC 33909 / DSM 639 / JCM 8929 / NBRC 15157 / NCIMB 11770).